A 758-amino-acid polypeptide reads, in one-letter code: Calcium up-regulated protein E (758 aa).

A disordered region spans residues 1–22 (MINIEDISKSSNQSEEKQLKST). Ricin B-type lectin domains follow at residues 25 to 145 (KPKY…WTTF) and 156 to 288 (GYFQ…WIAN).

This sequence belongs to the cup family.

Its subcellular location is the cytoplasm. It localises to the membrane. Its function is as follows. May play an important role in stabilizing and/or regulating the cell membrane during Ca(2+) stress or certain stages of development. This chain is Calcium up-regulated protein E (cupE), found in Dictyostelium discoideum (Social amoeba).